Consider the following 390-residue polypeptide: Chorismate synthase (390 aa).

NADP(+)-binding residues include Arg-39 and Arg-45. Residues 132 to 134 (RSS), 253 to 254 (NA), Gly-298, 313 to 317 (KPIPT), and Arg-339 contribute to the FMN site.

Belongs to the chorismate synthase family. In terms of assembly, homotetramer. The cofactor is FMNH2.

It catalyses the reaction 5-O-(1-carboxyvinyl)-3-phosphoshikimate = chorismate + phosphate. The protein operates within metabolic intermediate biosynthesis; chorismate biosynthesis; chorismate from D-erythrose 4-phosphate and phosphoenolpyruvate: step 7/7. Its function is as follows. Catalyzes the anti-1,4-elimination of the C-3 phosphate and the C-6 proR hydrogen from 5-enolpyruvylshikimate-3-phosphate (EPSP) to yield chorismate, which is the branch point compound that serves as the starting substrate for the three terminal pathways of aromatic amino acid biosynthesis. This reaction introduces a second double bond into the aromatic ring system. The sequence is that of Chorismate synthase from Bacillus licheniformis (strain ATCC 14580 / DSM 13 / JCM 2505 / CCUG 7422 / NBRC 12200 / NCIMB 9375 / NCTC 10341 / NRRL NRS-1264 / Gibson 46).